Consider the following 469-residue polypeptide: Putative pyridoxal-dependent decarboxylase domain-containing protein 2 (469 aa).

The stretch at 12–40 (TLAEMGKNLKEAVKMLEDSQRRTEEENGK) forms a coiled coil. Positions 28–44 (EDSQRRTEEENGKKLIS) are enriched in basic and acidic residues. The tract at residues 28-47 (EDSQRRTEEENGKKLISRDI) is disordered.

It belongs to the group II decarboxylase family. Requires pyridoxal 5'-phosphate as cofactor.

The protein is Putative pyridoxal-dependent decarboxylase domain-containing protein 2 (PDXDC2P) of Homo sapiens (Human).